The primary structure comprises 590 residues: Aspartate--tRNA(Asp/Asn) ligase (590 aa).

E176 is an L-aspartate binding site. Positions 200-203 (QLFK) are aspartate. The L-aspartate site is built by R222 and H451. 222-224 (RDE) lines the ATP pocket. Position 485 (E485) interacts with ATP. R492 is a binding site for L-aspartate. 537–540 (GIDR) contacts ATP.

The protein belongs to the class-II aminoacyl-tRNA synthetase family. Type 1 subfamily. In terms of assembly, homodimer.

The protein resides in the cytoplasm. It catalyses the reaction tRNA(Asx) + L-aspartate + ATP = L-aspartyl-tRNA(Asx) + AMP + diphosphate. Its function is as follows. Aspartyl-tRNA synthetase with relaxed tRNA specificity since it is able to aspartylate not only its cognate tRNA(Asp) but also tRNA(Asn). Reaction proceeds in two steps: L-aspartate is first activated by ATP to form Asp-AMP and then transferred to the acceptor end of tRNA(Asp/Asn). The protein is Aspartate--tRNA(Asp/Asn) ligase of Ehrlichia chaffeensis (strain ATCC CRL-10679 / Arkansas).